The primary structure comprises 595 residues: Protein LUTEIN DEFICIENT 5, chloroplastic (595 aa).

A chloroplast-targeting transit peptide spans 1 to 28 (MAMAFPLSYTPTITVKPVTYSRRSNFVV). C516 provides a ligand contact to heme.

It belongs to the cytochrome P450 family. Heme serves as cofactor.

It localises to the plastid. It is found in the chloroplast. Functionally, heme-containing cytochrome P450 involved in the biosynthesis of xanthophylls. Specific for beta-ring hydroxylation of alpha- and beta-carotene. Also has a low activity toward the epsilon-rings of alpha-carotene. The beta-ring of alpha-carotene is the preferred substrate in planta. The sequence is that of Protein LUTEIN DEFICIENT 5, chloroplastic (CYP97A3) from Arabidopsis thaliana (Mouse-ear cress).